The following is a 560-amino-acid chain: 2-succinyl-5-enolpyruvyl-6-hydroxy-3-cyclohexene-1-carboxylate synthase (560 aa).

It belongs to the TPP enzyme family. MenD subfamily. In terms of assembly, homodimer. Requires Mg(2+) as cofactor. The cofactor is Mn(2+). It depends on thiamine diphosphate as a cofactor.

The catalysed reaction is isochorismate + 2-oxoglutarate + H(+) = 5-enolpyruvoyl-6-hydroxy-2-succinyl-cyclohex-3-ene-1-carboxylate + CO2. Its pathway is quinol/quinone metabolism; 1,4-dihydroxy-2-naphthoate biosynthesis; 1,4-dihydroxy-2-naphthoate from chorismate: step 2/7. The protein operates within quinol/quinone metabolism; menaquinone biosynthesis. In terms of biological role, catalyzes the thiamine diphosphate-dependent decarboxylation of 2-oxoglutarate and the subsequent addition of the resulting succinic semialdehyde-thiamine pyrophosphate anion to isochorismate to yield 2-succinyl-5-enolpyruvyl-6-hydroxy-3-cyclohexene-1-carboxylate (SEPHCHC). This chain is 2-succinyl-5-enolpyruvyl-6-hydroxy-3-cyclohexene-1-carboxylate synthase, found in Lactococcus lactis subsp. lactis (strain IL1403) (Streptococcus lactis).